We begin with the raw amino-acid sequence, 474 residues long: Protein nucleotidyltransferase YdiU (474 aa).

ATP-binding residues include G89, G91, R92, K112, D124, G125, R175, and R182. The Proton acceptor role is filled by D256. Positions 257 and 266 each coordinate Mg(2+). An ATP-binding site is contributed by D266.

The protein belongs to the SELO family. Mg(2+) is required as a cofactor. The cofactor is Mn(2+).

The catalysed reaction is L-seryl-[protein] + ATP = 3-O-(5'-adenylyl)-L-seryl-[protein] + diphosphate. The enzyme catalyses L-threonyl-[protein] + ATP = 3-O-(5'-adenylyl)-L-threonyl-[protein] + diphosphate. It carries out the reaction L-tyrosyl-[protein] + ATP = O-(5'-adenylyl)-L-tyrosyl-[protein] + diphosphate. It catalyses the reaction L-histidyl-[protein] + UTP = N(tele)-(5'-uridylyl)-L-histidyl-[protein] + diphosphate. The catalysed reaction is L-seryl-[protein] + UTP = O-(5'-uridylyl)-L-seryl-[protein] + diphosphate. The enzyme catalyses L-tyrosyl-[protein] + UTP = O-(5'-uridylyl)-L-tyrosyl-[protein] + diphosphate. In terms of biological role, nucleotidyltransferase involved in the post-translational modification of proteins. It can catalyze the addition of adenosine monophosphate (AMP) or uridine monophosphate (UMP) to a protein, resulting in modifications known as AMPylation and UMPylation. This chain is Protein nucleotidyltransferase YdiU, found in Corynebacterium glutamicum (strain R).